Reading from the N-terminus, the 72-residue chain is Translational regulator CsrA (72 aa).

This sequence belongs to the CsrA/RsmA family. Homodimer; the beta-strands of each monomer intercalate to form a hydrophobic core, while the alpha-helices form wings that extend away from the core.

The protein resides in the cytoplasm. Its function is as follows. A translational regulator that binds mRNA to regulate translation initiation and/or mRNA stability. Usually binds in the 5'-UTR at or near the Shine-Dalgarno sequence preventing ribosome-binding, thus repressing translation. Its main target seems to be the major flagellin gene, while its function is anatagonized by FliW. This is Translational regulator CsrA from Clostridium botulinum (strain ATCC 19397 / Type A).